A 212-amino-acid polypeptide reads, in one-letter code: Cyclin-dependent kinase 2-interacting protein (212 aa).

N-acetylmethionine is present on methionine 1. Phosphoserine occurs at positions 69 and 73. A coiled-coil region spans residues 73–107; sequence SKENEEKVCLEYNEELEKLCEELQATLDGLTKIQV. Serine 202 is a Na(+) binding site.

It belongs to the CINP family. In terms of assembly, homodimer. Part of the 55LCC heterohexameric ATPase complex composed at least of AIRIM, AFG2A, AFG2B and CINP. Interacts with AIRIM. Interacts with CDK2 and CDC7. Interacts with the components of the replication complex, MCM2, MCM3, MCM4, MCM5, MCM6, MCM7 and with ORC2-containing complexes. Interacts with ATRIP. Interacts with CEP152. Associates with pre-60S ribosomal particles. Post-translationally, phosphorylated by CDC7 but not by CDK2.

Its subcellular location is the nucleus. Functionally, component of the DNA replication complex, which interacts with two kinases, CDK2 and CDC7, thereby providing a functional and physical link between CDK2 and CDC7 during firing of the origins of replication. Regulates ATR-mediated checkpoint signaling in response to DNA damage. Part of the 55LCC heterohexameric ATPase complex which is chromatin-associated and promotes replisome proteostasis to maintain replication fork progression and genome stability. Required for replication fork progression, sister chromatid cohesion, and chromosome stability. The ATPase activity is specifically enhanced by replication fork DNA and is coupled to cysteine protease-dependent cleavage of replisome substrates in response to replication fork damage. Uses ATPase activity to process replisome substrates in S-phase, facilitating their proteolytic turnover from chromatin to ensure DNA replication and mitotic fidelity. As part of 55LCC complex, also involved in the cytoplasmic maturation steps of pre-60S ribosomal particles by promoting the release of shuttling protein RSL24D1/RLP24 from the pre-ribosomal particles. The protein is Cyclin-dependent kinase 2-interacting protein of Homo sapiens (Human).